Consider the following 218-residue polypeptide: MRIILLGAPGAGKGTQAQFISSTFSIPQISTGDMLRAAINEGTPLGLEAKKVMDAGKLVSDEIILGLVKERLSKSDCKNGCLFDGFPRTIAQADALKNDCIQIDHVIDIEVDDEEIIKRMSGRRVHPASGRTYHVLFNPPAKEGVDDITGDPLVQREDDCEETVRKRLDIYHKETAPLIEYYREYKKNGGPNALKFSTIKGTGSVESIKEKILNIFHN.

G10–T15 contacts ATP. The interval S30 to V59 is NMP. AMP is bound by residues T31, R36, K57–V59, G85–R88, and Q92. The tract at residues G122–D159 is LID. Residues R123 and T132–Y133 each bind ATP. AMP is bound by residues R156 and R167. G203 is a binding site for ATP.

It belongs to the adenylate kinase family. As to quaternary structure, monomer.

The protein resides in the cytoplasm. It catalyses the reaction AMP + ATP = 2 ADP. Its pathway is purine metabolism; AMP biosynthesis via salvage pathway; AMP from ADP: step 1/1. Functionally, catalyzes the reversible transfer of the terminal phosphate group between ATP and AMP. Plays an important role in cellular energy homeostasis and in adenine nucleotide metabolism. This is Adenylate kinase from Chlorobium phaeobacteroides (strain BS1).